Here is a 430-residue protein sequence, read N- to C-terminus: RNA pseudouridine synthase 2, chloroplastic (430 aa).

A chloroplast-targeting transit peptide spans 1–43 (MLSISQLPSFSLTTAKSLRYPSSPSSSLSIFFSFFPKVSNFVR). The region spanning 82-155 (IRLDSWISSR…IPLDIVYEDK (74 aa)) is the S4 RNA-binding domain. The disordered stretch occupies residues 195-222 (SNSEEDDDSDEETFSDDEEMTTSPSSYA). Acidic residues predominate over residues 196-214 (NSEEDDDSDEETFSDDEEM). The active site involves Asp-234.

Belongs to the pseudouridine synthase RluA family.

The protein localises to the plastid. It localises to the chloroplast. The enzyme catalyses a uridine in RNA = a pseudouridine in RNA. The protein is RNA pseudouridine synthase 2, chloroplastic of Arabidopsis thaliana (Mouse-ear cress).